Here is a 482-residue protein sequence, read N- to C-terminus: Methylenetetrahydrofolate--tRNA-(uracil-5-)-methyltransferase TrmFO (482 aa).

20–25 (GGGLAG) contacts FAD.

It belongs to the MnmG family. TrmFO subfamily. It depends on FAD as a cofactor.

Its subcellular location is the cytoplasm. The enzyme catalyses uridine(54) in tRNA + (6R)-5,10-methylene-5,6,7,8-tetrahydrofolate + NADH + H(+) = 5-methyluridine(54) in tRNA + (6S)-5,6,7,8-tetrahydrofolate + NAD(+). It catalyses the reaction uridine(54) in tRNA + (6R)-5,10-methylene-5,6,7,8-tetrahydrofolate + NADPH + H(+) = 5-methyluridine(54) in tRNA + (6S)-5,6,7,8-tetrahydrofolate + NADP(+). Functionally, catalyzes the folate-dependent formation of 5-methyl-uridine at position 54 (M-5-U54) in all tRNAs. In Rhodopseudomonas palustris (strain HaA2), this protein is Methylenetetrahydrofolate--tRNA-(uracil-5-)-methyltransferase TrmFO.